The primary structure comprises 558 residues: Potassium-transporting ATPase potassium-binding subunit (558 aa).

11 consecutive transmembrane segments (helical) span residues 1-21, 59-79, 85-105, 130-150, 179-199, 245-265, 279-299, 374-394, 416-436, 484-504, and 527-547; these read MDTL…VLIH, PAYL…VYGL, FLPY…NTAV, GLAV…IALV, LSLV…FAGF, PTAW…FSLP, TAIV…LTIF, GLYG…LLVG, ILVT…IPAV, ALGV…LALA, and FVGL…FPVL.

It belongs to the KdpA family. The system is composed of three essential subunits: KdpA, KdpB and KdpC.

Its subcellular location is the cell membrane. In terms of biological role, part of the high-affinity ATP-driven potassium transport (or Kdp) system, which catalyzes the hydrolysis of ATP coupled with the electrogenic transport of potassium into the cytoplasm. This subunit binds the extracellular potassium ions and delivers the ions to the membrane domain of KdpB through an intramembrane tunnel. The chain is Potassium-transporting ATPase potassium-binding subunit from Clavibacter michiganensis subsp. michiganensis (strain NCPPB 382).